The primary structure comprises 550 residues: Chaperonin GroEL 1 (550 aa).

ATP contacts are provided by residues 30–33, K51, 87–91, G415, and D496; these read TLGP and DGTTT.

This sequence belongs to the chaperonin (HSP60) family. Forms a cylinder of 14 subunits composed of two heptameric rings stacked back-to-back. Interacts with the co-chaperonin GroES.

Its subcellular location is the cytoplasm. It carries out the reaction ATP + H2O + a folded polypeptide = ADP + phosphate + an unfolded polypeptide.. Functionally, together with its co-chaperonin GroES, plays an essential role in assisting protein folding. The GroEL-GroES system forms a nano-cage that allows encapsulation of the non-native substrate proteins and provides a physical environment optimized to promote and accelerate protein folding. The protein is Chaperonin GroEL 1 of Rhodopseudomonas palustris (strain HaA2).